A 172-amino-acid polypeptide reads, in one-letter code: Crossover junction endodeoxyribonuclease RuvC (172 aa).

Catalysis depends on residues Asp12, Glu71, and Asp143. 3 residues coordinate Mg(2+): Asp12, Glu71, and Asp143.

It belongs to the RuvC family. Homodimer which binds Holliday junction (HJ) DNA. The HJ becomes 2-fold symmetrical on binding to RuvC with unstacked arms; it has a different conformation from HJ DNA in complex with RuvA. In the full resolvosome a probable DNA-RuvA(4)-RuvB(12)-RuvC(2) complex forms which resolves the HJ. The cofactor is Mg(2+).

Its subcellular location is the cytoplasm. It catalyses the reaction Endonucleolytic cleavage at a junction such as a reciprocal single-stranded crossover between two homologous DNA duplexes (Holliday junction).. In terms of biological role, the RuvA-RuvB-RuvC complex processes Holliday junction (HJ) DNA during genetic recombination and DNA repair. Endonuclease that resolves HJ intermediates. Cleaves cruciform DNA by making single-stranded nicks across the HJ at symmetrical positions within the homologous arms, yielding a 5'-phosphate and a 3'-hydroxyl group; requires a central core of homology in the junction. The consensus cleavage sequence is 5'-(A/T)TT(C/G)-3'. Cleavage occurs on the 3'-side of the TT dinucleotide at the point of strand exchange. HJ branch migration catalyzed by RuvA-RuvB allows RuvC to scan DNA until it finds its consensus sequence, where it cleaves and resolves the cruciform DNA. The polypeptide is Crossover junction endodeoxyribonuclease RuvC (Coxiella burnetii (strain CbuG_Q212) (Coxiella burnetii (strain Q212))).